A 919-amino-acid chain; its full sequence is Kinesin-like protein KIN-6 (919 aa).

Residues 1–59 (MVRLSTKPPNPKVEMNLKEPPITGAGAGAAASPPAPSTLRRNPPRSARPPPTPLPNSKP) are disordered. Residues 28 to 45 (GAAASPPAPSTLRRNPPR) show a composition bias toward low complexity. Pro residues predominate over residues 46-56 (SARPPPTPLPN). Positions 72-415 (RLKVFLRIRP…LRQASPYMKI (344 aa)) constitute a Kinesin motor domain. An ATP-binding site is contributed by 171–178 (GPTGSGKT). 5 disordered regions span residues 591-615 (EEVS…TGTG), 674-700 (SESC…SFTD), 711-730 (SPQF…EEER), 737-764 (TTEG…EVNS), and 886-919 (KEEK…GRAQ). Residues 597–612 (STGHGPERSSDYDDKT) are compositionally biased toward basic and acidic residues. Residues 685–697 (HSSSSLDHPSDQS) are compositionally biased toward low complexity. Residues 755-764 (TPSCSQEVNS) are compositionally biased toward polar residues. The segment covering 886–912 (KEEKVKSSRDAMGRSDKLIRLLTDHPP) has biased composition (basic and acidic residues).

The protein belongs to the TRAFAC class myosin-kinesin ATPase superfamily. Kinesin family. KIN-6 subfamily.

This Oryza sativa subsp. japonica (Rice) protein is Kinesin-like protein KIN-6.